A 237-amino-acid chain; its full sequence is MQTPSENTNAKSDSLDEPGAYLIEENVALPKDIFHSYLSYWIYEAAHCTPVMLLSLVIGVLISIIILFHDNENCVGVSVGFLLIFSGILVIVLILRFGPQISDEDFKCKLLMEIITRKPTVKGKEWRTITYKMNQYLFDNDLWNTPYYFYRDEDCHRYFLSLIKGRTFKKQKESSASNVKDAQSNDETAGTPNEAAESSSFSAGPNFIKLLTKAAEIEQQFQKEYWRQEYPGVDEFF.

At 1–47 (MQTPSENTNAKSDSLDEPGAYLIEENVALPKDIFHSYLSYWIYEAAH) the chain is on the cytoplasmic side. Residues 48-68 (CTPVMLLSLVIGVLISIIILF) traverse the membrane as a helical segment. Residues 69-74 (HDNENC) are Extracellular-facing. A helical membrane pass occupies residues 75 to 95 (VGVSVGFLLIFSGILVIVLIL). Residues 96 to 237 (RFGPQISDED…QEYPGVDEFF (142 aa)) are Cytoplasmic-facing. The tract at residues 174–201 (SSASNVKDAQSNDETAGTPNEAAESSSF) is disordered. The tract at residues 236 to 237 (FF) is COPII binding.

Belongs to the DUP/COS family. In terms of assembly, interacts with PRM9. Binds to SEC23/24 of COPII coated vesicles.

Its subcellular location is the membrane. It localises to the endoplasmic reticulum. In terms of biological role, may be involved in endoplasmic reticulum exit trafficking of proteins. The chain is Pheromone-regulated membrane protein 8 (PRM8) from Saccharomyces cerevisiae (strain ATCC 204508 / S288c) (Baker's yeast).